The chain runs to 239 residues: DNA repair protein RecO (239 aa).

Belongs to the RecO family.

In terms of biological role, involved in DNA repair and RecF pathway recombination. This is DNA repair protein RecO from Bifidobacterium longum (strain DJO10A).